A 386-amino-acid chain; its full sequence is 1-deoxy-D-xylulose 5-phosphate reductoisomerase (386 aa).

Residues threonine 10, glycine 11, serine 12, isoleucine 13, glycine 36, asparagine 38, and asparagine 122 each coordinate NADPH. 1-deoxy-D-xylulose 5-phosphate is bound at residue lysine 123. Glutamate 124 contacts NADPH. Mn(2+) is bound at residue aspartate 148. Residues serine 149, glutamate 150, serine 174, and histidine 197 each coordinate 1-deoxy-D-xylulose 5-phosphate. Glutamate 150 contacts Mn(2+). NADPH is bound at residue glycine 203. 4 residues coordinate 1-deoxy-D-xylulose 5-phosphate: serine 210, asparagine 215, lysine 216, and glutamate 219. Glutamate 219 contributes to the Mn(2+) binding site.

This sequence belongs to the DXR family. It depends on Mg(2+) as a cofactor. Mn(2+) serves as cofactor.

It carries out the reaction 2-C-methyl-D-erythritol 4-phosphate + NADP(+) = 1-deoxy-D-xylulose 5-phosphate + NADPH + H(+). Its pathway is isoprenoid biosynthesis; isopentenyl diphosphate biosynthesis via DXP pathway; isopentenyl diphosphate from 1-deoxy-D-xylulose 5-phosphate: step 1/6. Its function is as follows. Catalyzes the NADPH-dependent rearrangement and reduction of 1-deoxy-D-xylulose-5-phosphate (DXP) to 2-C-methyl-D-erythritol 4-phosphate (MEP). This chain is 1-deoxy-D-xylulose 5-phosphate reductoisomerase, found in Geobacter sulfurreducens (strain ATCC 51573 / DSM 12127 / PCA).